We begin with the raw amino-acid sequence, 707 residues long: Prolyl endopeptidase-like (707 aa).

Catalysis depends on charge relay system residues Ser-538, Asp-624, and His-670.

Belongs to the peptidase S9A family. Homodimer.

Its subcellular location is the cytoplasm. It is found in the cytosol. Functionally, serine peptidase whose precise substrate specificity remains unclear. Does not cleave peptides after a arginine or lysine residue. Regulates trans-Golgi network morphology and sorting by regulating the membrane binding of the AP-1 complex. May play a role in the regulation of synaptic vesicle exocytosis. This Xenopus laevis (African clawed frog) protein is Prolyl endopeptidase-like (prepl).